Consider the following 619-residue polypeptide: MPKLRSATSTEGRNMAGARALWRATGVKDNDFGKPIIAIANSFTQFVPGHVHLKDMGSLVADAIEEAGGIAKEFNTIAVDDGIAMGHGGMLYSLPSRELIADSVEYMVNAHCADALVCISNCDKITPGMLMAALRLNIPVVFVSGGPMEAGKTKLSDKLIKLDLVDAMVAAADSSVSDEDSAKIERSACPTCGSCSGMFTANSMNCLTEALGLSLPGNGSMLATHADRRELFLEAGRRVMALTKRYYEQDDASALPRNIASFKAFENAMALDIAMGGSSNTVLHLLAAAQEADVAFTMDDIDRMSRQVPHLCKVAPSTAKYHMEDVHRAGGVMGILGELDRAGLLHTDVPHVAADAGGNLKSVLAKYDVMQTQDDKVKQFFMAGPAGIPTTKAFSQDCRWPSLDDDRREGCIRSREFAFSQEGGLAVLSGNLADNGCIVKTAGVDESNLTFIGSARVYESQDDAVAGILGGEVVAGDVVVIRYEGPKGGPGMQEMLYPTSYLKSRGLGKACALITDGRFSGGTSGLSIGHVSPEAAAGGTIALIENGDRIEIDIPKRSIKLAVSDAELAARRETMLARGPMAWKPLSRQRYVSMALKAYAMLATSADKGAVRDRSKLED.

A Mg(2+)-binding site is contributed by D81. Position 122 (C122) interacts with [2Fe-2S] cluster. D123 and K124 together coordinate Mg(2+). At K124 the chain carries N6-carboxylysine. C195 is a binding site for [2Fe-2S] cluster. A Mg(2+)-binding site is contributed by E494. The active-site Proton acceptor is the S520.

It belongs to the IlvD/Edd family. Homodimer. The cofactor is [2Fe-2S] cluster. Mg(2+) is required as a cofactor.

It carries out the reaction (2R)-2,3-dihydroxy-3-methylbutanoate = 3-methyl-2-oxobutanoate + H2O. The enzyme catalyses (2R,3R)-2,3-dihydroxy-3-methylpentanoate = (S)-3-methyl-2-oxopentanoate + H2O. It functions in the pathway amino-acid biosynthesis; L-isoleucine biosynthesis; L-isoleucine from 2-oxobutanoate: step 3/4. It participates in amino-acid biosynthesis; L-valine biosynthesis; L-valine from pyruvate: step 3/4. Functions in the biosynthesis of branched-chain amino acids. Catalyzes the dehydration of (2R,3R)-2,3-dihydroxy-3-methylpentanoate (2,3-dihydroxy-3-methylvalerate) into 2-oxo-3-methylpentanoate (2-oxo-3-methylvalerate) and of (2R)-2,3-dihydroxy-3-methylbutanoate (2,3-dihydroxyisovalerate) into 2-oxo-3-methylbutanoate (2-oxoisovalerate), the penultimate precursor to L-isoleucine and L-valine, respectively. The chain is Dihydroxy-acid dehydratase from Shewanella sp. (strain ANA-3).